Consider the following 245-residue polypeptide: tRNA pseudouridine synthase A (245 aa).

Catalysis depends on Asp52, which acts as the Nucleophile. Tyr111 is a substrate binding site.

It belongs to the tRNA pseudouridine synthase TruA family. Homodimer.

It catalyses the reaction uridine(38/39/40) in tRNA = pseudouridine(38/39/40) in tRNA. Its function is as follows. Formation of pseudouridine at positions 38, 39 and 40 in the anticodon stem and loop of transfer RNAs. The sequence is that of tRNA pseudouridine synthase A from Rhodopseudomonas palustris (strain HaA2).